We begin with the raw amino-acid sequence, 148 residues long: Putative fusion protein (148 aa).

The interval 1-34 (MDRALSTFPGDDDETNERNINHREKTSGEHGHYE) is disordered. Residues 16–34 (NERNINHREKTSGEHGHYE) are compositionally biased toward basic and acidic residues.

It belongs to the poxviruses fusion protein family. As to quaternary structure, homotrimer, covalently linked.

It is found in the virion membrane. The chain is Putative fusion protein from Sheeppox virus (strain KS-1) (SPPV).